A 314-amino-acid chain; its full sequence is DNA-directed RNA polymerase subunit alpha (314 aa).

The tract at residues M1–N227 is alpha N-terminal domain (alpha-NTD). An alpha C-terminal domain (alpha-CTD) region spans residues K241–N314.

This sequence belongs to the RNA polymerase alpha chain family. In terms of assembly, in plastids the minimal PEP RNA polymerase catalytic core is composed of four subunits: alpha, beta, beta', and beta''. When a (nuclear-encoded) sigma factor is associated with the core the holoenzyme is formed, which can initiate transcription.

It is found in the plastid. The protein localises to the chloroplast. It catalyses the reaction RNA(n) + a ribonucleoside 5'-triphosphate = RNA(n+1) + diphosphate. In terms of biological role, DNA-dependent RNA polymerase catalyzes the transcription of DNA into RNA using the four ribonucleoside triphosphates as substrates. This Rhodomonas salina (Cryptomonas salina) protein is DNA-directed RNA polymerase subunit alpha.